We begin with the raw amino-acid sequence, 402 residues long: Zinc finger CCHC domain-containing protein 12 (402 aa).

Over residues 268-277 the composition is skewed to acidic residues; that stretch reads DTPDDSDEDV. The segment at 268–342 is disordered; that stretch reads DTPDDSDEDV…PGNMRRTRKR (75 aa). Residues 311–323 are compositionally biased toward polar residues; the sequence is SPNNSQFPSPCTS. The segment at 346-363 adopts a CCHC-type zinc-finger fold; the sequence is IRCSYCGEEGHSKETCDN. A compositionally biased stretch (basic and acidic residues) spans 383 to 392; that stretch reads HTEERSREAP. The interval 383 to 402 is disordered; sequence HTEERSREAPVEPSDPCELQ.

Belongs to the ZCCHC12 family. In terms of assembly, interacts with SMAD1 and CREB-binding protein (CBP). Forms a protein-DNA complex through its association with SMAD1.

Transcriptional coactivator in the bone morphogenetic protein (BMP)-signaling pathway. It positively modulates BMP signaling by interacting with SMAD1 and associating with CBP in the transcription complex. It contributes to the BMP-induced enhancement of cholinergic-neuron-specific gene expression. The protein is Zinc finger CCHC domain-containing protein 12 (ZCCHC12) of Bos taurus (Bovine).